A 438-amino-acid polypeptide reads, in one-letter code: 23S rRNA (uracil(1939)-C(5))-methyltransferase RlmD (438 aa).

A TRAM domain is found at 4–68; it reads FYTPGRRTAT…RHFARGRVTR (65 aa). [4Fe-4S] cluster-binding residues include Cys81, Cys87, Cys90, and Cys167. Positions 269, 298, 303, 319, 346, and 367 each coordinate S-adenosyl-L-methionine. The Nucleophile role is filled by Cys393.

This sequence belongs to the class I-like SAM-binding methyltransferase superfamily. RNA M5U methyltransferase family. RlmD subfamily.

The catalysed reaction is uridine(1939) in 23S rRNA + S-adenosyl-L-methionine = 5-methyluridine(1939) in 23S rRNA + S-adenosyl-L-homocysteine + H(+). In terms of biological role, catalyzes the formation of 5-methyl-uridine at position 1939 (m5U1939) in 23S rRNA. The polypeptide is 23S rRNA (uracil(1939)-C(5))-methyltransferase RlmD (Edwardsiella ictaluri (strain 93-146)).